The chain runs to 290 residues: 4-diphosphocytidyl-2-C-methyl-D-erythritol kinase (290 aa).

Lysine 10 is an active-site residue. 96 to 106 (PIAAGLGGGSS) is a binding site for ATP. Aspartate 138 is a catalytic residue.

The protein belongs to the GHMP kinase family. IspE subfamily.

It catalyses the reaction 4-CDP-2-C-methyl-D-erythritol + ATP = 4-CDP-2-C-methyl-D-erythritol 2-phosphate + ADP + H(+). The protein operates within isoprenoid biosynthesis; isopentenyl diphosphate biosynthesis via DXP pathway; isopentenyl diphosphate from 1-deoxy-D-xylulose 5-phosphate: step 3/6. Functionally, catalyzes the phosphorylation of the position 2 hydroxy group of 4-diphosphocytidyl-2C-methyl-D-erythritol. The protein is 4-diphosphocytidyl-2-C-methyl-D-erythritol kinase of Caulobacter vibrioides (strain NA1000 / CB15N) (Caulobacter crescentus).